The chain runs to 916 residues: MKTSKIIIASLVSLTLVSNPILTFAATNDVIDSTTEITTDKEISSTQPTIKTTLKAGQTQSFNDWFPDDNFASEVAAAFEMQATDTISEEQLATLTSLDCHNSSIADMTGIEKLTGLTKLICTYNNITTLDLSQNTNLTYLACDSNKLTNLDVTPLTKLTYLNCDTNKLTKIDVSQNPLLTYLNCARNTLTEIDVSHNTQLTELDCHLNKKITKLDVTPQTQLTTLDCSFNKITALDVSQNKLLNRLNCDTNNITKLDLNQNIQLTFLNCSSNKLTEIDVTPLTQLTYFDCSVNPLTELDVSTLSKLTTLHCIQTDLLEIDLTHNTQLIYFQAEGCRKIKELDVTHNTQLYLLDCQAAGITELDLSQNPKLVYLYLNNTELTKLDVSHNTKLKSLSCVNAHIQDFSSVGKIPVLNNNLDAEGQTITMPKETLTNNSLTIAVSPDLLDQFGNPMNIEPGDGGVYDQATNTITWENLSTDNPAVTYTFTSENGAIVGTVTTPFEAPQPIKGEDVTVHYLDDKGEKLAADEVLSGNLDDPYTSSAKDIPDYTLTTTPDNATGTFTTTSQSVTYVYTKNIVAAEPVTVNYVDDTGKTLAPSETLNGNVGDTYNATAKQIDGYTLSTTPNNATGTFNTSSQTVTYVYTKNIVAAEPVTVNYVDDTGKTLAPSETLNGNVGDTYNATAKQIDGYTLSAEPTNATGQFTSSAQTVNYIYTKNPAPEKGVVEIHYVDENNKQLSSATKISGTVGDNYTTEPKNIDGYTLTTTPDNATGTFNTSSQTVTYVYTKNIVAAEPVTVNYVDANGKTLAPSETLNGTIGDTYNATAKQIDGYTLSAEPTNATGQFTNSAQTVNYIYTKNTNIDQPLPDKKTTKPSNLKTTEVKKASDTLPKTGDSTPWKSALLGVFLSSTALVIWKKKK.

A signal peptide spans 1 to 25; it reads MKTSKIIIASLVSLTLVSNPILTFA. LRR repeat units lie at residues 94–115, 116–136, 137–157, 158–179, 180–200, 201–221, 222–243, 244–263, 264–284, 285–306, 316–325, 338–357, 359–368, and 380–402; these read TLTS…EKLT, GLTK…SQNT, NLTY…TPLT, KLTY…QNPL, LTYL…HNTQ, LTEL…TPQT, QLTT…QNKL, LNRL…NQNI, QLTF…TPLT, QLTY…TLSK, DLLEIDLTHN, KIKE…DCQA, GITELDLSQN, and ELTK…NAHI. MucBP domains are found at residues 506 to 568, 576 to 638, 646 to 708, 717 to 779, and 787 to 849; these read PIKG…SQSV, IVAA…SQTV, IVAA…AQTV, and APEK…SQTV. A disordered region spans residues 862–888; the sequence is PLPDKKTTKPSNLKTTEVKKASDTLPK. The LPXTG sorting signal signature appears at 886–890; that stretch reads LPKTG. Pentaglycyl murein peptidoglycan amidated threonine is present on T889. Positions 890–916 are cleaved as a propeptide — removed by sortase; the sequence is GDSTPWKSALLGVFLSSTALVIWKKKK.

This sequence belongs to the internalin family.

The protein resides in the secreted. It localises to the cell wall. Its function is as follows. Involved in several steps of L.monocytogenes infection, probably improves adhesin to host cells. The protein is Internalin J (inlJ) of Listeria monocytogenes serotype 4b (strain F2365).